The following is a 123-amino-acid chain: Large ribosomal subunit protein uL29 (123 aa).

It belongs to the universal ribosomal protein uL29 family. Component of the large ribosomal subunit.

The protein resides in the cytoplasm. Functionally, component of the large ribosomal subunit. The ribosome is a large ribonucleoprotein complex responsible for the synthesis of proteins in the cell. The protein is Large ribosomal subunit protein uL29 (rpl35) of Platichthys flesus (European flounder).